A 94-amino-acid polypeptide reads, in one-letter code: Co-chaperonin GroES (94 aa).

This sequence belongs to the GroES chaperonin family. Heptamer of 7 subunits arranged in a ring. Interacts with the chaperonin GroEL.

It localises to the cytoplasm. Together with the chaperonin GroEL, plays an essential role in assisting protein folding. The GroEL-GroES system forms a nano-cage that allows encapsulation of the non-native substrate proteins and provides a physical environment optimized to promote and accelerate protein folding. GroES binds to the apical surface of the GroEL ring, thereby capping the opening of the GroEL channel. The sequence is that of Co-chaperonin GroES from Shouchella clausii (strain KSM-K16) (Alkalihalobacillus clausii).